The following is a 197-amino-acid chain: MSLIRTETRDTKRAADPLHDLRSKPFSEWGEDEIRRFNLIDALLEFVYTDTSSPFGIGMTFDYTECWEIGVRDDCLVMTRVKPVHPEYAKHWNMKGVMNDKTRFHADKWVGYSKVLAWVSLSHKDTFTGAKRFQYFQTMYDMERQINANLPVGGLPNVDTERTGKLFQRDDFSEDSHANDPKLVGDDYVPQAPEQIN.

Positions 168-185 (QRDDFSEDSHANDPKLVG) are enriched in basic and acidic residues. Residues 168–197 (QRDDFSEDSHANDPKLVGDDYVPQAPEQIN) form a disordered region.

This is an uncharacterized protein from Escherichia coli (strain K12).